A 142-amino-acid chain; its full sequence is Small ribosomal subunit protein bS6 (142 aa).

Positions 110–142 (NKKPSHAKEKHEKTEHAHSHHAEEAKSTESHSE) are disordered.

Belongs to the bacterial ribosomal protein bS6 family.

In terms of biological role, binds together with bS18 to 16S ribosomal RNA. This chain is Small ribosomal subunit protein bS6, found in Helicobacter pylori (strain G27).